Here is a 398-residue protein sequence, read N- to C-terminus: Enoyl-[acyl-carrier-protein] reductase [NADH] (398 aa).

NAD(+) contacts are provided by residues 48–53, 74–75, 111–112, and 139–140; these read GASTGY, FE, DA, and LA. Residue Tyr-225 participates in substrate binding. Tyr-235 (proton donor) is an active-site residue. NAD(+) contacts are provided by residues Lys-244 and 273–275; that span reads VVT.

Belongs to the TER reductase family. Monomer.

The enzyme catalyses a 2,3-saturated acyl-[ACP] + NAD(+) = a (2E)-enoyl-[ACP] + NADH + H(+). It functions in the pathway lipid metabolism; fatty acid biosynthesis. Functionally, involved in the final reduction of the elongation cycle of fatty acid synthesis (FAS II). Catalyzes the reduction of a carbon-carbon double bond in an enoyl moiety that is covalently linked to an acyl carrier protein (ACP). The chain is Enoyl-[acyl-carrier-protein] reductase [NADH] from Pseudomonas fluorescens (strain ATCC BAA-477 / NRRL B-23932 / Pf-5).